A 120-amino-acid chain; its full sequence is Large ribosomal subunit protein uL18 (120 aa).

It belongs to the universal ribosomal protein uL18 family. Part of the 50S ribosomal subunit; part of the 5S rRNA/L5/L18/L25 subcomplex. Contacts the 5S and 23S rRNAs.

Functionally, this is one of the proteins that bind and probably mediate the attachment of the 5S RNA into the large ribosomal subunit, where it forms part of the central protuberance. This is Large ribosomal subunit protein uL18 from Azorhizobium caulinodans (strain ATCC 43989 / DSM 5975 / JCM 20966 / LMG 6465 / NBRC 14845 / NCIMB 13405 / ORS 571).